The following is a 120-amino-acid chain: Putative non-specific lipid-transfer protein 14 (120 aa).

Positions 1–22 (MTRSFSPVVSLFLLLLQTICSA) are cleaved as a signal peptide. Intrachain disulfides connect cysteine 30–cysteine 80, cysteine 40–cysteine 57, cysteine 58–cysteine 102, and cysteine 78–cysteine 116.

Belongs to the plant LTP family.

Functionally, plant non-specific lipid-transfer proteins transfer phospholipids as well as galactolipids across membranes. May play a role in wax or cutin deposition in the cell walls of expanding epidermal cells and certain secretory tissues. The chain is Putative non-specific lipid-transfer protein 14 (LTP14) from Arabidopsis thaliana (Mouse-ear cress).